The chain runs to 1279 residues: Amylopullulanase (1279 aa).

The signal sequence occupies residues 1-35; the sequence is MYKKLFTKKFISFVMSLLLVLTAAFSSMPFHNVYA. Asp248, Asn250, Asp288, Asp343, Asn401, Asp403, Asn406, Asp407, Gly452, and Asp454 together coordinate Ca(2+). Positions 527 and 627 each coordinate substrate. Residue Asp629 is the Nucleophile of the active site. The active-site Proton donor is Glu658. Residues 734–735, Asp794, and Arg798 contribute to the substrate site; that span reads HD. 2 Fibronectin type-III domains span residues 930–1022 and 1158–1252; these read APQV…AYPI and KPTA…VVPI.

The protein belongs to the glycosyl hydrolase 13 family. The cofactor is Ca(2+).

It carries out the reaction Endohydrolysis of (1-&gt;4)-alpha-D-glucosidic linkages in polysaccharides containing three or more (1-&gt;4)-alpha-linked D-glucose units.. The catalysed reaction is Hydrolysis of (1-&gt;6)-alpha-D-glucosidic linkages in pullulan, amylopectin and glycogen, and in the alpha- and beta-limit dextrins of amylopectin and glycogen.. The chain is Amylopullulanase (apu) from Thermoanaerobacterium saccharolyticum.